We begin with the raw amino-acid sequence, 514 residues long: MYSQRFGTVQREVKGPTPKVVIVRSKPPKGQGAEHHLERIRRSHQKHNAILASIKSSERDRLKAEWDQHNDCKILDSLVRARIKDAVQGFIINIEERRNKLRELLALEENEYFTEMQLKKETIEEKKDRMREKTKLLKEKNEKERQDFVAEKLDQQFRERCEELRVELLSIHQKKVCEERKAQIAFNEELSRQKLVEEQMFSKLWEEDRLAKEKREAQEARRQKELMENTRLGLNAQITSIKAQRQATQLLKEEEARLVESNNAQIKHENEQDMLKKQKAKQETRTILQKALQERIEHIQQEYRDEQDLNMKLVQRALQDLQEEADKKKQKREDMIREQKIYHKYLAQRREEEKAQEKEFDRILEEDKAKKLAEKDKELRLEKEARRQLVDEVMCTRKLQVQEKLQREAKEQEERAMEQKHINESLKELNCEEKENFARRQRLAQEYRKQLQMQIAYQQQSQEAEKEEKRREFEAGVAANKMCLDKVQEVLSTHQVLPQNIHPMRKACPSKLPP.

Coiled-coil stretches lie at residues 91–148 (IINI…RQDF) and 203–474 (KLWE…REFE).

The protein belongs to the CFAP53 family. Microtubule inner protein component of sperm flagellar doublet microtubules. Interacts with PIERCE1 and PIERCE2; the interactions link outer dynein arms docking complex (ODA-DC) to the internal microtubule inner proteins (MIP) in cilium axoneme. Interacts with CCDC38. Interacts with CCDC42 and IFT88. Interacts with centriolar satellite proteins PIBF1/CEP90 and PCM1. Interacts with dyneins DNAIC1, DNAIC2 AND DNAH11 and with ODA-DC component ODAD4/TTC25. In terms of tissue distribution, expressed in skin fibroblasts (at protein level). Expressed in nasal respiratory epithelial cells (at protein level). Expressed in airway epithelial cells.

Its subcellular location is the cytoplasm. It is found in the cytoskeleton. It localises to the cilium axoneme. The protein localises to the flagellum axoneme. The protein resides in the microtubule organizing center. Its subcellular location is the centrosome. It is found in the centriole. It localises to the centriolar satellite. The protein localises to the spindle pole. The protein resides in the cell projection. Its subcellular location is the cilium. Microtubule inner protein (MIP) part of the dynein-decorated doublet microtubules (DMTs) in cilia axoneme, which is required for motile cilia beating. Regulates motility patterns of both 9+0 and 9+2 motile cilia through differential localization and recruitment of axonemal dynein components. Required for centriolar satellite integrity and non-motile cilium assembly. Required for motile cilium formation. Through its role in the beating of primary cilia, involved in the establishment of organ laterality during embryogenesis. Required for sperm flagellum biogenesis and is essential for male fertility. The sequence is that of Cilia- and flagella-associated protein 53 from Homo sapiens (Human).